A 341-amino-acid chain; its full sequence is Phenylalanine--tRNA ligase alpha subunit (341 aa).

Glu-253 contributes to the Mg(2+) binding site.

The protein belongs to the class-II aminoacyl-tRNA synthetase family. Phe-tRNA synthetase alpha subunit type 1 subfamily. In terms of assembly, tetramer of two alpha and two beta subunits. Mg(2+) is required as a cofactor.

Its subcellular location is the cytoplasm. The catalysed reaction is tRNA(Phe) + L-phenylalanine + ATP = L-phenylalanyl-tRNA(Phe) + AMP + diphosphate + H(+). The protein is Phenylalanine--tRNA ligase alpha subunit of Methylococcus capsulatus (strain ATCC 33009 / NCIMB 11132 / Bath).